The following is a 182-amino-acid chain: Adenylate kinase (182 aa).

Gly-12 to Thr-17 provides a ligand contact to ATP. The tract at residues Ser-32–Val-61 is NMP. Residues Thr-33, Arg-38, Glu-59–Val-61, Gly-85–Arg-88, and Gln-92 each bind AMP. The tract at residues Gly-126–Asp-132 is LID. Residue Arg-127 coordinates ATP. 2 residues coordinate AMP: Arg-129 and Arg-140. Gly-168 is an ATP binding site.

Belongs to the adenylate kinase family. As to quaternary structure, monomer.

It is found in the cytoplasm. The catalysed reaction is AMP + ATP = 2 ADP. Its pathway is purine metabolism; AMP biosynthesis via salvage pathway; AMP from ADP: step 1/1. Its function is as follows. Catalyzes the reversible transfer of the terminal phosphate group between ATP and AMP. Plays an important role in cellular energy homeostasis and in adenine nucleotide metabolism. This is Adenylate kinase from Prochlorococcus marinus (strain SARG / CCMP1375 / SS120).